Reading from the N-terminus, the 171-residue chain is 2-C-methyl-D-erythritol 2,4-cyclodiphosphate synthase (171 aa).

Positions 8 and 10 each coordinate a divalent metal cation. 4-CDP-2-C-methyl-D-erythritol 2-phosphate is bound by residues 8–10 (DVH) and 34–35 (HS). His42 is an a divalent metal cation binding site. Residues 56–58 (DIG), 61–65 (FPDTD), 132–135 (TTTE), Phe139, and Arg142 each bind 4-CDP-2-C-methyl-D-erythritol 2-phosphate.

This sequence belongs to the IspF family. As to quaternary structure, homotrimer. It depends on a divalent metal cation as a cofactor.

The enzyme catalyses 4-CDP-2-C-methyl-D-erythritol 2-phosphate = 2-C-methyl-D-erythritol 2,4-cyclic diphosphate + CMP. It participates in isoprenoid biosynthesis; isopentenyl diphosphate biosynthesis via DXP pathway; isopentenyl diphosphate from 1-deoxy-D-xylulose 5-phosphate: step 4/6. Its function is as follows. Involved in the biosynthesis of isopentenyl diphosphate (IPP) and dimethylallyl diphosphate (DMAPP), two major building blocks of isoprenoid compounds. Catalyzes the conversion of 4-diphosphocytidyl-2-C-methyl-D-erythritol 2-phosphate (CDP-ME2P) to 2-C-methyl-D-erythritol 2,4-cyclodiphosphate (ME-CPP) with a corresponding release of cytidine 5-monophosphate (CMP). The chain is 2-C-methyl-D-erythritol 2,4-cyclodiphosphate synthase from Geotalea daltonii (strain DSM 22248 / JCM 15807 / FRC-32) (Geobacter daltonii).